A 436-amino-acid chain; its full sequence is Tol-Pal system protein TolB (436 aa).

An N-terminal signal peptide occupies residues 1–28; that stretch reads MMKCSFFRAILVAVGLMAAAVVATPANA.

It belongs to the TolB family. In terms of assembly, the Tol-Pal system is composed of five core proteins: the inner membrane proteins TolA, TolQ and TolR, the periplasmic protein TolB and the outer membrane protein Pal. They form a network linking the inner and outer membranes and the peptidoglycan layer.

Its subcellular location is the periplasm. Part of the Tol-Pal system, which plays a role in outer membrane invagination during cell division and is important for maintaining outer membrane integrity. The polypeptide is Tol-Pal system protein TolB (Rhizobium etli (strain CIAT 652)).